A 391-amino-acid chain; its full sequence is N-acetylaspartylglutamate synthase A (391 aa).

The ATP-grasp domain occupies 115–300; that stretch reads FQELAGHGVP…VGGIIADYTM (186 aa). ATP-binding positions include lysine 154, 189–199, and arginine 215; that span reads QKYVKESHGKD. 3 residues coordinate Mg(2+): aspartate 260, glutamate 273, and asparagine 275. The Mn(2+) site is built by aspartate 260, glutamate 273, and asparagine 275. Residue serine 319 is modified to Phosphoserine. Over residues 341 to 350 the composition is skewed to polar residues; that stretch reads TINSGSTSSE. Residues 341–379 form a disordered region; it reads TINSGSTSSESEPELGEIRDSSASTMGAPPSMLPEPGYN.

It belongs to the RimK family. The cofactor is Mg(2+). Mn(2+) serves as cofactor.

It localises to the cytoplasm. The enzyme catalyses N-acetyl-L-aspartate + L-glutamate + ATP = N-acetyl-L-aspartyl-L-glutamate + ADP + phosphate + H(+). The catalysed reaction is N-acetyl-L-aspartate + 2 L-glutamate + 2 ATP = N-acetyl-L-aspartyl-L-glutamyl-L-glutamate + 2 ADP + 2 phosphate + 2 H(+). Catalyzes the synthesis of N-acetyl-L-aspartyl-L-glutamate (NAAG) and N-acetyl-L-aspartyl-L-glutamyl-L-glutamate. The chain is N-acetylaspartylglutamate synthase A (RIMKLA) from Homo sapiens (Human).